Here is a 450-residue protein sequence, read N- to C-terminus: L-galactonate dehydratase (450 aa).

Lysine 221 is an active-site residue. Aspartate 251, glutamate 277, and glutamate 306 together coordinate Mg(2+). Residue histidine 356 is part of the active site.

It belongs to the mandelate racemase/muconate lactonizing enzyme family. Mg(2+) serves as cofactor.

It catalyses the reaction L-galactonate = 2-dehydro-3-deoxy-L-galactonate + H2O. It functions in the pathway carbohydrate acid metabolism. In terms of biological role, mediates the conversion of L-galactonate to 2-dehydro-3-deoxy-L-galactonate, the second step in D-galacturonate catabolic process. The chain is L-galactonate dehydratase (lgd1) from Hypocrea jecorina (Trichoderma reesei).